We begin with the raw amino-acid sequence, 258 residues long: MGQTIKEIKARLAELTDLSAKEFLEFETDERAGVQAALKSRKKQILAECAEDERLEQMLEFEKELYSQEIELIAGIDEVGRGALAGPVVTAAVILPKNCKIRGLNDSKKVPKSKHHAILSEIQEKALAIGIGIVDAEKIDEVNIYEATKIAMIQAVSKLSLKPEHLLIDAMVLDLPIAQTKIIHGDARSASIAAASIVAKVTRDEMMKDFALEFPEYDFEHNAGYGTAKHLAALTKYGITRIHRKSYEPIKSMVNFKY.

Residues 71–258 enclose the RNase H type-2 domain; the sequence is ELIAGIDEVG…PIKSMVNFKY (188 aa). A divalent metal cation-binding residues include Asp77, Glu78, and Asp169.

The protein belongs to the RNase HII family. The cofactor is Mn(2+). Requires Mg(2+) as cofactor.

The protein localises to the cytoplasm. The catalysed reaction is Endonucleolytic cleavage to 5'-phosphomonoester.. Endonuclease that specifically degrades the RNA of RNA-DNA hybrids. This is Ribonuclease HII from Lactococcus lactis subsp. cremoris (strain SK11).